The primary structure comprises 460 residues: Benzyl alcohol O-benzoyltransferase (460 aa).

Catalysis depends on proton acceptor residues H167 and D382.

This sequence belongs to the plant acyltransferase family. As to expression, specifically expressed in flowers, mainly in the limb of flowers corollas, and, at low levels, in roots, stems, sepals and leaves.

It carries out the reaction benzyl alcohol + benzoyl-CoA = benzyl benzoate + CoA. It catalyses the reaction benzyl alcohol + acetyl-CoA = benzyl acetate + CoA. The enzyme catalyses 3-hydroxybenzyl alcohol + acetyl-CoA = 3-hydroxy-benzyl acetate + CoA. The catalysed reaction is 3-hydroxybenzyl alcohol + benzoyl-CoA = 3-hydroxy-benzyl benzoate + CoA. It carries out the reaction 2-phenylethanol + benzoyl-CoA = phenethyl benzoate + CoA. It catalyses the reaction (3Z)-hex-3-en-1-ol + benzoyl-CoA = (3Z)-hex-3-en-1-yl benzoate + CoA. The enzyme catalyses (2E)-geraniol + acetyl-CoA = (2E)-geranyl acetate + CoA. The catalysed reaction is butan-1-ol + benzoyl-CoA = butyl benzoate + CoA. It carries out the reaction (2E)-geraniol + benzoyl-CoA = (2E)-geranyl benzoate + CoA. It catalyses the reaction octan-1-ol + benzoyl-CoA = octyl benzoate + CoA. The protein operates within aromatic compound metabolism; benzoyl-CoA degradation. In terms of biological role, involved in the production of volatile organic compounds (VOCs), including floral volatile benzenoids and phenylpropanoids (FVBP), in flowers of fragrant cultivars (e.g. cv. Mitchell and cv. V26), scent attracting pollinators (e.g. the night-active hawkmoth pollinator Manduca sexta). Acyltransferase that catalyzes the transfer of benzoyl and acetyl moieties to a large variety of potential substrate alcohols, and involved in the formation of volatile esters benzyl benzoate and phenylethyl benzoate from benzoyl-CoA. With acetyl-CoA, mainly active on benzyl alcohol, and, to a lower extent, on 3-hydroxybenzyl alcohol, geraniol, and 2-phenylethanol, but barely active on butanol, 1-octanol, 4-hydroxy-benzyl alcohol, 2-hexanol, cis-3-hexen-1-ol and linalool. With benzoyl-CoA, mainly active on benzyl alcohol, but also efficient on several substrates, including 3-hydroxybenzyl alcohol, 2-phenylethanol, geraniol, butanol, cis-3-hexen-1-ol and 1-octanol. The protein is Benzyl alcohol O-benzoyltransferase of Petunia hybrida (Petunia).